Consider the following 113-residue polypeptide: Integration host factor subunit alpha (113 aa).

Disordered stretches follow at residues 59-80 and 94-113; these read GNFQVRDKPPRPGRNPKTGETI and QKLKSVVEQPNSPPDPASAE. The span at 104 to 113 shows a compositional bias: pro residues; it reads NSPPDPASAE.

It belongs to the bacterial histone-like protein family. As to quaternary structure, heterodimer of an alpha and a beta chain.

In terms of biological role, this protein is one of the two subunits of integration host factor, a specific DNA-binding protein that functions in genetic recombination as well as in transcriptional and translational control. This is Integration host factor subunit alpha from Bordetella pertussis (strain Tohama I / ATCC BAA-589 / NCTC 13251).